Reading from the N-terminus, the 470-residue chain is PTS system trehalose-specific EIIBC component (470 aa).

The 88-residue stretch at 1 to 88 (MGELNKSARQ…VKETGIGEST (88 aa)) folds into the PTS EIIB type-1 domain. Cys-27 acts as the Phosphocysteine intermediate; for EIIB activity in catalysis. Cys-27 is subject to Phosphocysteine; by EIIA. Residues 108–470 (KTLADIFIPI…TYAYARFKHK (363 aa)) enclose the PTS EIIC type-1 domain. 10 consecutive transmembrane segments (helical) span residues 110 to 130 (LADI…LMGI), 160 to 180 (INLI…WSAV), 183 to 203 (FGGN…PDLL), 234 to 254 (GQVL…VFLT), 263 to 283 (LLVV…IIIG), 301 to 321 (FGSF…ALVI), 326 to 346 (HTFL…TFLW), 347 to 367 (PMLA…MFIV), 403 to 423 (FIIA…QGVL), and 443 to 463 (WGAF…GTYA).

It localises to the cell membrane. It catalyses the reaction alpha,alpha-trehalose(out) + N(pros)-phospho-L-histidyl-[protein] = alpha,alpha-trehalose 6-phosphate(in) + L-histidyl-[protein]. In terms of biological role, the phosphoenolpyruvate-dependent sugar phosphotransferase system (sugar PTS), a major carbohydrate active transport system, catalyzes the phosphorylation of incoming sugar substrates concomitantly with their translocation across the cell membrane. This system is involved in trehalose transport. The polypeptide is PTS system trehalose-specific EIIBC component (treP) (Bacillus subtilis (strain 168)).